We begin with the raw amino-acid sequence, 1001 residues long: Serine/threonine-protein kinase TAO1 (1001 aa).

Residue Ser-9 is modified to Phosphoserine. The 254-residue stretch at 28 to 281 (FTDLREIGHG…SEELLKHIFV (254 aa)) folds into the Protein kinase domain. ATP-binding positions include 34-42 (IGHGSFGAV) and Lys-57. Asp-151 acts as the Proton acceptor in catalysis. Positions 324–433 (PAVEAQEEEE…QVSRHKSHYR (110 aa)) are disordered. The span at 350 to 373 (SNQSIPSMSISASSQSSSVNSLPD) shows a compositional bias: low complexity. 2 stretches are compositionally biased toward basic and acidic residues: residues 375 to 388 (SDDKSELDMMEGDH) and 399 to 416 (LKPEEENYREEGDPRTRA). Residues Ser-421 and Ser-445 each carry the phosphoserine modification. A coiled-coil region spans residues 458-651 (SELREQMSGY…QTQKDLEHAM (194 aa)). The disordered stretch occupies residues 567–587 (KEELNENQSTPKKEKQEWLSK). Positions 577–587 (PKKEKQEWLSK) are enriched in basic and acidic residues. Position 669 is a phosphothreonine (Thr-669). Residues 754 to 877 (KAVLKRLKEE…LERQAREIEA (124 aa)) adopt a coiled-coil conformation. The segment at 911–1001 (SHNPTGGPGP…ISNGSHMSYT (91 aa)) is disordered. A Phosphoserine modification is found at Ser-965. Residues 975–1001 (GGRTEQGMSRSTSVTSQISNGSHMSYT) show a composition bias toward polar residues.

The protein belongs to the protein kinase superfamily. STE Ser/Thr protein kinase family. STE20 subfamily. As to quaternary structure, self-associates. Interacts with MAP2K3. Interacts with SPRED1. Interacts with TESK1; the interaction inhibits TAOK1 kinase activity. Interacts with MAP3K7. Proteolytically processed by caspase-3 (CASP3). Post-translationally, autophosphorylated. Phosphorylated by ATM in response to DNA damage. Phosphorylated by LRRK2. As to expression, highly expressed in the testis, and to a lower extent also expressed in brain, placenta, colon and skeletal muscle.

The protein localises to the cytoplasm. The enzyme catalyses L-seryl-[protein] + ATP = O-phospho-L-seryl-[protein] + ADP + H(+). The catalysed reaction is L-threonyl-[protein] + ATP = O-phospho-L-threonyl-[protein] + ADP + H(+). With respect to regulation, serine/threonine-protein kinase activity is inhibited by SPRED1. Its function is as follows. Serine/threonine-protein kinase involved in various processes such as p38/MAPK14 stress-activated MAPK cascade, DNA damage response and regulation of cytoskeleton stability. Phosphorylates MAP2K3, MAP2K6 and MARK2. Acts as an activator of the p38/MAPK14 stress-activated MAPK cascade by mediating phosphorylation and subsequent activation of the upstream MAP2K3 and MAP2K6 kinases. Involved in G-protein coupled receptor signaling to p38/MAPK14. In response to DNA damage, involved in the G2/M transition DNA damage checkpoint by activating the p38/MAPK14 stress-activated MAPK cascade, probably by mediating phosphorylation of MAP2K3 and MAP2K6. Acts as a regulator of cytoskeleton stability by phosphorylating 'Thr-208' of MARK2, leading to activate MARK2 kinase activity and subsequent phosphorylation and detachment of MAPT/TAU from microtubules. Also acts as a regulator of apoptosis: regulates apoptotic morphological changes, including cell contraction, membrane blebbing and apoptotic bodies formation via activation of the MAPK8/JNK cascade. Plays an essential role in the regulation of neuronal development in the central nervous system. Also plays a role in the regulation of neuronal migration to the cortical plate. The protein is Serine/threonine-protein kinase TAO1 (TAOK1) of Homo sapiens (Human).